The sequence spans 86 residues: Latartoxin-1b (86 aa).

Residues 1 to 19 (MKILVLAVVCTVLLQVALS) form the signal peptide. A propeptide spans 20-26 (ADSEEVR) (removed in mature form). Residues 23 to 26 (EEVR) carry the Processing quadruplet motif motif. 4 cysteine pairs are disulfide-bonded: Cys28–Cys43, Cys35–Cys48, Cys42–Cys65, and Cys50–Cys63.

It belongs to the neurotoxin 19 (CSTX) family. Post-translationally, contains 4 disulfide bonds. In terms of processing, cleavage of the propeptide depends on the processing quadruplet motif (XXXR, with at least one of X being E). As to expression, expressed by the venom gland.

The protein localises to the secreted. In terms of biological role, insect toxin. The polypeptide is Latartoxin-1b (Lachesana tarabaevi (Spider)).